Consider the following 482-residue polypeptide: uncharacterized protein (482 aa).

One can recognise an HTH gntR-type domain in the interval L12–N80. Residues Q40–E59 constitute a DNA-binding region (H-T-H motif). An N6-(pyridoxal phosphate)lysine modification is found at K325.

It in the C-terminal section; belongs to the class-I pyridoxal-phosphate-dependent aminotransferase family. Pyridoxal 5'-phosphate serves as cofactor.

This is an uncharacterized protein from Bacillus subtilis (strain 168).